The following is a 257-amino-acid chain: Zinc import ATP-binding protein ZnuC (257 aa).

The ABC transporter domain occupies 5 to 220 (ITLKNVAVNF…PEFIAMFGHH (216 aa)). Residue 37–44 (GPNGAGKS) coordinates ATP.

Belongs to the ABC transporter superfamily. Zinc importer (TC 3.A.1.15.5) family. In terms of assembly, the complex is composed of two ATP-binding proteins (ZnuC), two transmembrane proteins (ZnuB) and a solute-binding protein (ZnuA).

It is found in the cell inner membrane. The catalysed reaction is Zn(2+)(out) + ATP(in) + H2O(in) = Zn(2+)(in) + ADP(in) + phosphate(in) + H(+)(in). Functionally, part of the ABC transporter complex ZnuABC involved in zinc import. Responsible for energy coupling to the transport system. The chain is Zinc import ATP-binding protein ZnuC from Photorhabdus laumondii subsp. laumondii (strain DSM 15139 / CIP 105565 / TT01) (Photorhabdus luminescens subsp. laumondii).